Reading from the N-terminus, the 106-residue chain is Ribonuclease P protein component 4 (106 aa).

4 residues coordinate Zn(2+): C63, C66, C89, and C92.

Belongs to the eukaryotic/archaeal RNase P protein component 4 family. As to quaternary structure, consists of a catalytic RNA component and at least 4-5 protein subunits. Requires Zn(2+) as cofactor.

The protein localises to the cytoplasm. It carries out the reaction Endonucleolytic cleavage of RNA, removing 5'-extranucleotides from tRNA precursor.. Functionally, part of ribonuclease P, a protein complex that generates mature tRNA molecules by cleaving their 5'-ends. The sequence is that of Ribonuclease P protein component 4 from Methanosphaerula palustris (strain ATCC BAA-1556 / DSM 19958 / E1-9c).